Reading from the N-terminus, the 496-residue chain is Genome polyprotein (496 aa).

At 1 to 447 (SRCTHLENRD…HTVLGGAFNS (447 aa)) the chain is on the extracellular side. 6 cysteine pairs are disulfide-bonded: cysteine 3–cysteine 30, cysteine 60–cysteine 116, cysteine 60–cysteine 121, cysteine 74–cysteine 105, cysteine 92–cysteine 116, and cysteine 92–cysteine 121. The interval 98-111 (DRGWGNHCGLFGKG) is fusion peptide. The N-linked (GlcNAc...) asparagine; by host glycan is linked to asparagine 154. 2 disulfide bridges follow: cysteine 186-cysteine 290 and cysteine 307-cysteine 338. The helical transmembrane segment at 448–468 (IFGGVGFLPKLLMGVALAWLG) threads the bilayer. At 469–479 (LNTRNPTMSMS) the chain is on the cytoplasmic side. The helical transmembrane segment at 480–496 (FLLAGGLVLAMTLGVGA) threads the bilayer.

Homodimer; in the endoplasmic reticulum and Golgi. In terms of processing, N-glycosylated.

Its subcellular location is the virion membrane. It is found in the host endoplasmic reticulum membrane. In terms of biological role, binds to host cell surface receptor and mediates fusion between viral and cellular membranes. Envelope protein is synthesized in the endoplasmic reticulum in the form of heterodimer with protein prM. They play a role in virion budding in the ER, and the newly formed immature particle is covered with 60 spikes composed of heterodimer between precursor prM and envelope protein E. The virion is transported to the Golgi apparatus where the low pH causes dissociation of PrM-E heterodimers and formation of E homodimers. prM-E cleavage is ineficient, and many virions are only partially matured. These uncleaved prM would play a role in immune evasion. In Bos taurus (Bovine), this protein is Genome polyprotein.